A 219-amino-acid chain; its full sequence is Dual specificity phosphatase 29 (219 aa).

The Tyrosine-protein phosphatase domain maps to 53 to 201 (HVNEVWPKLY…LRELDRQLVQ (149 aa)). 145–152 (HCVMGRSR) provides a ligand contact to substrate. Cys-146 functions as the Phosphocysteine intermediate in the catalytic mechanism.

This sequence belongs to the protein-tyrosine phosphatase family. Non-receptor class dual specificity subfamily. Homodimer. Interacts with PRKAA2.

The protein resides in the cytoplasm. It localises to the nucleus. The catalysed reaction is O-phospho-L-tyrosyl-[protein] + H2O = L-tyrosyl-[protein] + phosphate. The enzyme catalyses O-phospho-L-seryl-[protein] + H2O = L-seryl-[protein] + phosphate. It carries out the reaction O-phospho-L-threonyl-[protein] + H2O = L-threonyl-[protein] + phosphate. In terms of biological role, dual specificity phosphatase able to dephosphorylate phosphotyrosine, phosphoserine and phosphothreonine residues within the same substrate, with a preference for phosphotyrosine as a substrate. Involved in the modulation of intracellular signaling cascades. May regulate glucose metabolism by activating, AMPK, an energy sensor protein kinase. Affects MAP kinase signaling though modulation of the ERK1/2 cascade in skeletal muscle promoting muscle cell differentiation, development and atrophy. This Bos taurus (Bovine) protein is Dual specificity phosphatase 29 (DUSP29).